The chain runs to 250 residues: 2,5-dichloro-2,5-cyclohexadiene-1,4-diol dehydrogenase (250 aa).

NAD(+) is bound at residue 9-34; that stretch reads IIVTGGGSGIGRATVELLVASGANVA. Ser141 serves as a coordination point for substrate. Tyr154 functions as the Proton acceptor in the catalytic mechanism.

The protein belongs to the short-chain dehydrogenases/reductases (SDR) family.

It catalyses the reaction 2,5-dichlorocyclohexa-2,5-dien-1,4-diol + NAD(+) = 2,5-dichlorohydroquinone + NADH + H(+). It participates in xenobiotic degradation; gamma-hexachlorocyclohexane degradation. Catalyzes the dehydrogenation of 2,5-dichloro-2,5-cyclohexadiene-1,4-diol (2,5-DDOL) to 2,5-dichlorohydroquinone (2,5-DCHQ), a step in the degradation of gamma-hexachlorocyclohexane (gamma-HCH or lindane). Has an essential role in this assimilation pathway that allows S.japonicum UT26 to grow on gamma-HCH as the sole source of carbon and energy. The chain is 2,5-dichloro-2,5-cyclohexadiene-1,4-diol dehydrogenase from Sphingobium indicum (strain DSM 16413 / CCM 7287 / MTCC 6362 / UT26 / NBRC 101211 / UT26S) (Sphingobium japonicum).